The chain runs to 342 residues: Spermidine synthase (342 aa).

Positions 9-42 (MKGTELPVKRPREEEAETEMEAANNSNNGCEKEE) are disordered. The PABS domain occupies 52 to 289 (PGWFSEISPL…GMIGFMLCST (238 aa)). Glutamine 83 contacts S-adenosyl 3-(methylsulfanyl)propylamine. Position 113 (tyrosine 113) interacts with putrescine. Residues glutamine 114, aspartate 138, glutamate 158, 189-190 (DG), and aspartate 208 contribute to the S-adenosyl 3-(methylsulfanyl)propylamine site. The active-site Proton acceptor is the aspartate 208. Residues 208 to 211 (DSSD) and tyrosine 277 each bind putrescine.

This sequence belongs to the spermidine/spermine synthase family.

It catalyses the reaction S-adenosyl 3-(methylsulfanyl)propylamine + putrescine = S-methyl-5'-thioadenosine + spermidine + H(+). The protein operates within amine and polyamine biosynthesis; spermidine biosynthesis; spermidine from putrescine: step 1/1. The sequence is that of Spermidine synthase (SPDSYN) from Solanum lycopersicum (Tomato).